Here is a 185-residue protein sequence, read N- to C-terminus: ATP synthase subunit b, chloroplastic (185 aa).

A helical membrane pass occupies residues Leu27–Leu49.

Belongs to the ATPase B chain family. In terms of assembly, F-type ATPases have 2 components, F(1) - the catalytic core - and F(0) - the membrane proton channel. F(1) has five subunits: alpha(3), beta(3), gamma(1), delta(1), epsilon(1). F(0) has four main subunits: a(1), b(1), b'(1) and c(10-14). The alpha and beta chains form an alternating ring which encloses part of the gamma chain. F(1) is attached to F(0) by a central stalk formed by the gamma and epsilon chains, while a peripheral stalk is formed by the delta, b and b' chains.

The protein localises to the plastid. The protein resides in the chloroplast thylakoid membrane. In terms of biological role, f(1)F(0) ATP synthase produces ATP from ADP in the presence of a proton or sodium gradient. F-type ATPases consist of two structural domains, F(1) containing the extramembraneous catalytic core and F(0) containing the membrane proton channel, linked together by a central stalk and a peripheral stalk. During catalysis, ATP synthesis in the catalytic domain of F(1) is coupled via a rotary mechanism of the central stalk subunits to proton translocation. Component of the F(0) channel, it forms part of the peripheral stalk, linking F(1) to F(0). The sequence is that of ATP synthase subunit b, chloroplastic from Vitis vinifera (Grape).